A 373-amino-acid polypeptide reads, in one-letter code: Meiosis-specific kinetochore protein (373 aa).

Disordered stretches follow at residues 1–91 (MWPL…QDEK) and 250–276 (STPE…LTST). Positions 77–91 (SLQENRSSEDTQDEK) are enriched in basic and acidic residues. Positions 275-277 (STP) match the POLO box domain (PBD)-binding motif. Residues 332 to 335 (EICC) form a required for localization to kinetochores region.

Interacts with CENPC. Interacts with PLK1; required for recruitment of PLK1 at kinetochores.

Its subcellular location is the chromosome. The protein localises to the centromere. The protein resides in the kinetochore. In terms of biological role, key regulator of kinetochore function during meiosis I: required both for mono-orientation of kinetochores on sister chromosomes and protection of centromeric cohesin from separase-mediated cleavage. Acts by facilitating kinetochore mono-orientation during meiosis I, when kinetochores on sister chromosomes face the same direction and are thus captured and pulled by spindle fibers from the same pole. Also required to prevent cleavage of cohesin at centromeres during meiosis I, possibly by acting as a regulator of the shugoshin-dependent protection pathway. Acts in collaboration with PLK1: required for PLK1 enrichment to kinetochores. Not required during meiosis II or mitosis. This chain is Meiosis-specific kinetochore protein, found in Homo sapiens (Human).